The following is a 257-amino-acid chain: Phycoerythrobilin:ferredoxin oxidoreductase (257 aa).

The protein belongs to the HY2 family.

It catalyses the reaction (3Z)-phycoerythrobilin + oxidized 2[4Fe-4S]-[ferredoxin] = 15,16-dihydrobiliverdin + reduced 2[4Fe-4S]-[ferredoxin] + 2 H(+). Catalyzes the two-electron reduction of the C2 and C3(1) diene system of 15,16-dihydrobiliverdin. The sequence is that of Phycoerythrobilin:ferredoxin oxidoreductase from Prochlorococcus marinus (strain MIT 9211).